The primary structure comprises 196 residues: Imidazoleglycerol-phosphate dehydratase (196 aa).

Belongs to the imidazoleglycerol-phosphate dehydratase family.

Its subcellular location is the cytoplasm. It carries out the reaction D-erythro-1-(imidazol-4-yl)glycerol 3-phosphate = 3-(imidazol-4-yl)-2-oxopropyl phosphate + H2O. It functions in the pathway amino-acid biosynthesis; L-histidine biosynthesis; L-histidine from 5-phospho-alpha-D-ribose 1-diphosphate: step 6/9. The sequence is that of Imidazoleglycerol-phosphate dehydratase from Desulforamulus reducens (strain ATCC BAA-1160 / DSM 100696 / MI-1) (Desulfotomaculum reducens).